The sequence spans 379 residues: Alanine racemase (379 aa).

Lys37 acts as the Proton acceptor; specific for D-alanine in catalysis. Lys37 bears the N6-(pyridoxal phosphate)lysine mark. Arg139 is a substrate binding site. Tyr266 functions as the Proton acceptor; specific for L-alanine in the catalytic mechanism. Substrate is bound at residue Met314.

It belongs to the alanine racemase family. Pyridoxal 5'-phosphate is required as a cofactor.

The enzyme catalyses L-alanine = D-alanine. It functions in the pathway amino-acid biosynthesis; D-alanine biosynthesis; D-alanine from L-alanine: step 1/1. Functionally, catalyzes the interconversion of L-alanine and D-alanine. May also act on other amino acids. The chain is Alanine racemase (alr) from Sorangium cellulosum (strain So ce56) (Polyangium cellulosum (strain So ce56)).